Consider the following 321-residue polypeptide: uncharacterized protein (321 aa).

The next 10 membrane-spanning stretches (helical) occupy residues 6-26 (LFIGALTCLVASMSWGAMFPV), 37-57 (FYFSFIRYGVVTIMLVILLLV), 72-92 (WIILFGVMAFTIYNVLIFLGQ), 100-120 (IMTASIAEALMPMLSIVILWG), 134-154 (ILIAFLGASMVITKGNISFFF), 160-180 (LFSILFIFIGVLGWVVYTMGG), 196-216 (CLFGTAITGIMTAILTAQGYV), 223-243 (VIAAIKYDFLFMITLPGIIAL), 255-275 (SINGILFINFVPITTLLIMVI), and 277-297 (GYNITAFDIVGTLFVIIGLIL). EamA domains lie at 18 to 146 (MSWG…MVIT) and 175 to 300 (VYTM…LNNI).

Belongs to the EamA transporter family.

The protein localises to the cell membrane. This is an uncharacterized protein from Bacillus subtilis (strain 168).